We begin with the raw amino-acid sequence, 212 residues long: 3,4-dihydroxy-2-butanone 4-phosphate synthase (212 aa).

Residues 37–38 (RE), Asp42, 150–154 (RRGHT), and Glu174 contribute to the D-ribulose 5-phosphate site. Residue Glu38 coordinates Mg(2+). A Mg(2+)-binding site is contributed by His153.

The protein belongs to the DHBP synthase family. As to quaternary structure, homodimer. Requires Mg(2+) as cofactor. It depends on Mn(2+) as a cofactor.

It carries out the reaction D-ribulose 5-phosphate = (2S)-2-hydroxy-3-oxobutyl phosphate + formate + H(+). It functions in the pathway cofactor biosynthesis; riboflavin biosynthesis; 2-hydroxy-3-oxobutyl phosphate from D-ribulose 5-phosphate: step 1/1. Its function is as follows. Catalyzes the conversion of D-ribulose 5-phosphate to formate and 3,4-dihydroxy-2-butanone 4-phosphate. This Shewanella pealeana (strain ATCC 700345 / ANG-SQ1) protein is 3,4-dihydroxy-2-butanone 4-phosphate synthase.